The chain runs to 288 residues: Small ribosomal subunit protein uS2 (288 aa).

Positions 259 to 276 are enriched in low complexity; the sequence is EAAPAAEEAPAAEAEAAA. Residues 259-288 are disordered; sequence EAAPAAEEAPAAEAEAAATDTSSESDKTEA.

This sequence belongs to the universal ribosomal protein uS2 family.

This is Small ribosomal subunit protein uS2 from Maricaulis maris (strain MCS10) (Caulobacter maris).